Reading from the N-terminus, the 312-residue chain is Bifunctional pinoresinol-lariciresinol reductase (312 aa).

Residues 11-17, R36, and K45 contribute to the NADP(+) site; that span reads GGTGYIG. Catalysis depends on K138, which acts as the Proton acceptor. R142 lines the NADP(+) pocket. Residue H270 coordinates substrate.

This sequence belongs to the NmrA-type oxidoreductase family. Isoflavone reductase subfamily. As to quaternary structure, dimer.

The enzyme catalyses (+)-lariciresinol + NADP(+) = (+)-pinoresinol + NADPH + H(+). It carries out the reaction (-)-secoisolariciresinol + NADP(+) = (+)-lariciresinol + NADPH + H(+). In terms of biological role, reductase involved in lignan biosynthesis. Catalyzes the enantioselective sequential conversion of (+)-pinoresinol into (+)-lariciresinol and of (+)-lariciresinol into (-)-secoisolariciresinol. Abstracts the 4R-hydride from the NADPH cofactor during catalysis. In Thuja plicata (Western red-cedar), this protein is Bifunctional pinoresinol-lariciresinol reductase.